A 346-amino-acid chain; its full sequence is UDP-N-acetylenolpyruvoylglucosamine reductase (346 aa).

The 171-residue stretch at Ile17–Glu187 folds into the FAD-binding PCMH-type domain. Residue Arg163 is part of the active site. The active-site Proton donor is Ser233. The active site involves Glu329.

This sequence belongs to the MurB family. FAD serves as cofactor.

It localises to the cytoplasm. It carries out the reaction UDP-N-acetyl-alpha-D-muramate + NADP(+) = UDP-N-acetyl-3-O-(1-carboxyvinyl)-alpha-D-glucosamine + NADPH + H(+). Its pathway is cell wall biogenesis; peptidoglycan biosynthesis. Functionally, cell wall formation. The sequence is that of UDP-N-acetylenolpyruvoylglucosamine reductase from Photobacterium profundum (strain SS9).